The sequence spans 353 residues: Virulence plasmid protein pGP2-D (353 aa).

The chain is Virulence plasmid protein pGP2-D from Chlamydia muridarum (strain MoPn / Nigg).